Reading from the N-terminus, the 350-residue chain is Probable nicotinate-nucleotide adenylyltransferase/Ap4A hydrolase (350 aa).

Residues Met1–Ile187 are naMN adenylyltransferase. Residues Asp196–Asp350 are ap4A hydrolase. The HD domain maps to Arg198–Asn310. His201 is an ADP binding site. Residues His201, His230, and Asp231 each coordinate Fe cation. Residues Asp231–Lys234, His261, His287–Thr288, Asp305, and Arg311 each bind ADP. Fe cation is bound at residue Asp305.

In the N-terminal section; belongs to the NadD family. This sequence in the C-terminal section; belongs to the Ap4A hydrolase YqeK family.

It carries out the reaction nicotinate beta-D-ribonucleotide + ATP + H(+) = deamido-NAD(+) + diphosphate. The enzyme catalyses P(1),P(4)-bis(5'-adenosyl) tetraphosphate + H2O = 2 ADP + 2 H(+). It functions in the pathway cofactor biosynthesis; NAD(+) biosynthesis; deamido-NAD(+) from nicotinate D-ribonucleotide: step 1/1. Functionally, catalyzes the reversible adenylation of nicotinate mononucleotide (NaMN) to nicotinic acid adenine dinucleotide (NaAD). In terms of biological role, hydrolyzes diadenosine 5',5'''-P1,P4-tetraphosphate (Ap4A) to yield ADP. In Mycoplasma genitalium (strain ATCC 33530 / DSM 19775 / NCTC 10195 / G37) (Mycoplasmoides genitalium), this protein is Probable nicotinate-nucleotide adenylyltransferase/Ap4A hydrolase.